A 637-amino-acid chain; its full sequence is DNA mismatch repair protein MutL (637 aa).

2 disordered regions span residues aspartate 352–phenylalanine 384 and alanine 405–glutamine 430.

Belongs to the DNA mismatch repair MutL/HexB family.

Functionally, this protein is involved in the repair of mismatches in DNA. It is required for dam-dependent methyl-directed DNA mismatch repair. May act as a 'molecular matchmaker', a protein that promotes the formation of a stable complex between two or more DNA-binding proteins in an ATP-dependent manner without itself being part of a final effector complex. The sequence is that of DNA mismatch repair protein MutL from Halalkalibacterium halodurans (strain ATCC BAA-125 / DSM 18197 / FERM 7344 / JCM 9153 / C-125) (Bacillus halodurans).